The following is a 189-amino-acid chain: Elongation factor P (189 aa).

The residue at position 34 (lysine 34) is an N6-(3,6-diaminohexanoyl)-5-hydroxylysine.

The protein belongs to the elongation factor P family. Post-translationally, may be beta-lysylated on the epsilon-amino group of Lys-34 by the combined action of EpmA and EpmB, and then hydroxylated on the C5 position of the same residue by EpmC (if this protein is present). Lysylation is critical for the stimulatory effect of EF-P on peptide-bond formation. The lysylation moiety may extend toward the peptidyltransferase center and stabilize the terminal 3-CCA end of the tRNA. Hydroxylation of the C5 position on Lys-34 may allow additional potential stabilizing hydrogen-bond interactions with the P-tRNA.

It localises to the cytoplasm. Its pathway is protein biosynthesis; polypeptide chain elongation. In terms of biological role, involved in peptide bond synthesis. Alleviates ribosome stalling that occurs when 3 or more consecutive Pro residues or the sequence PPG is present in a protein, possibly by augmenting the peptidyl transferase activity of the ribosome. Modification of Lys-34 is required for alleviation. The sequence is that of Elongation factor P from Legionella pneumophila (strain Lens).